The sequence spans 536 residues: Indolin-2-one monooxygenase (536 aa).

Residues 18–34 (GTATHALLLGVLIFLVI) traverse the membrane as a helical segment. Cys-480 provides a ligand contact to heme.

The protein belongs to the cytochrome P450 family. The cofactor is heme.

The protein resides in the membrane. It catalyses the reaction indolin-2-one + reduced [NADPH--hemoprotein reductase] + O2 = 3-hydroxyindolin-2-one + oxidized [NADPH--hemoprotein reductase] + H2O + H(+). It participates in secondary metabolite biosynthesis; 2,4-dihydroxy-1,4-benzoxazin-3-one biosynthesis; 2,4-dihydroxy-1,4-benzoxazin-3-one from indoleglycerol phosphate: step 3/5. Functionally, catalyzes the conversion of indolin-2-one to 3-hydroxyindolin-2-one. This is Indolin-2-one monooxygenase (CYP71C2) from Zea mays (Maize).